The primary structure comprises 344 residues: Dihydroorotase (344 aa).

Zn(2+)-binding residues include histidine 13 and histidine 15. Substrate is bound by residues 15–17 (HLR) and asparagine 41. Lysine 98, histidine 135, and histidine 173 together coordinate Zn(2+). At lysine 98 the chain carries N6-carboxylysine. Residue histidine 135 coordinates substrate. A substrate-binding site is contributed by leucine 218. Aspartate 247 provides a ligand contact to Zn(2+). Aspartate 247 is a catalytic residue. Histidine 251 and alanine 263 together coordinate substrate.

The protein belongs to the metallo-dependent hydrolases superfamily. DHOase family. Class II DHOase subfamily. As to quaternary structure, homodimer. It depends on Zn(2+) as a cofactor.

The enzyme catalyses (S)-dihydroorotate + H2O = N-carbamoyl-L-aspartate + H(+). The protein operates within pyrimidine metabolism; UMP biosynthesis via de novo pathway; (S)-dihydroorotate from bicarbonate: step 3/3. Catalyzes the reversible cyclization of carbamoyl aspartate to dihydroorotate. The polypeptide is Dihydroorotase (Neisseria meningitidis serogroup B (strain ATCC BAA-335 / MC58)).